We begin with the raw amino-acid sequence, 424 residues long: Serine--tRNA ligase (424 aa).

T231 to E233 serves as a coordination point for L-serine. Position 262-264 (R262–E264) interacts with ATP. Residue E285 participates in L-serine binding. ATP is bound at residue E349–S352. Residue S385 coordinates L-serine.

Belongs to the class-II aminoacyl-tRNA synthetase family. Type-1 seryl-tRNA synthetase subfamily. Homodimer. The tRNA molecule binds across the dimer.

The protein localises to the cytoplasm. The catalysed reaction is tRNA(Ser) + L-serine + ATP = L-seryl-tRNA(Ser) + AMP + diphosphate + H(+). It carries out the reaction tRNA(Sec) + L-serine + ATP = L-seryl-tRNA(Sec) + AMP + diphosphate + H(+). Its pathway is aminoacyl-tRNA biosynthesis; selenocysteinyl-tRNA(Sec) biosynthesis; L-seryl-tRNA(Sec) from L-serine and tRNA(Sec): step 1/1. Functionally, catalyzes the attachment of serine to tRNA(Ser). Is also able to aminoacylate tRNA(Sec) with serine, to form the misacylated tRNA L-seryl-tRNA(Sec), which will be further converted into selenocysteinyl-tRNA(Sec). This Geobacillus thermodenitrificans (strain NG80-2) protein is Serine--tRNA ligase.